The following is a 156-amino-acid chain: Small ribosomal subunit protein uS7 (156 aa).

It belongs to the universal ribosomal protein uS7 family. In terms of assembly, part of the 30S ribosomal subunit. Contacts proteins S9 and S11.

Its function is as follows. One of the primary rRNA binding proteins, it binds directly to 16S rRNA where it nucleates assembly of the head domain of the 30S subunit. Is located at the subunit interface close to the decoding center, probably blocks exit of the E-site tRNA. The chain is Small ribosomal subunit protein uS7 from Gloeobacter violaceus (strain ATCC 29082 / PCC 7421).